A 119-amino-acid chain; its full sequence is Large ribosomal subunit protein uL14 (119 aa).

It belongs to the universal ribosomal protein uL14 family. In terms of assembly, part of the 50S ribosomal subunit. Forms a cluster with proteins L3 and L19. In the 70S ribosome, L14 and L19 interact and together make contacts with the 16S rRNA in bridges B5 and B8.

Functionally, binds to 23S rRNA. Forms part of two intersubunit bridges in the 70S ribosome. The polypeptide is Large ribosomal subunit protein uL14 (Wolbachia pipientis wMel).